The primary structure comprises 173 residues: Peptidyl-prolyl cis-trans isomerase cyp3 (173 aa).

The PPIase cyclophilin-type domain occupies Phe8–Glu172.

The protein belongs to the cyclophilin-type PPIase family. PPIase H subfamily.

The protein resides in the cytoplasm. The protein localises to the cytoskeleton. It localises to the microtubule organizing center. It is found in the spindle pole body. It carries out the reaction [protein]-peptidylproline (omega=180) = [protein]-peptidylproline (omega=0). In terms of biological role, PPIases accelerate the folding of proteins. It catalyzes the cis-trans isomerization of proline imidic peptide bonds in oligopeptides. The sequence is that of Peptidyl-prolyl cis-trans isomerase cyp3 (cyp3) from Schizosaccharomyces pombe (strain 972 / ATCC 24843) (Fission yeast).